The primary structure comprises 204 residues: Large ribosomal subunit protein eL15 (204 aa).

It belongs to the eukaryotic ribosomal protein eL15 family.

This Chironomus tentans (Midge) protein is Large ribosomal subunit protein eL15 (RpL15).